Here is a 300-residue protein sequence, read N- to C-terminus: Ribonuclease HIII (300 aa).

The RNase H type-2 domain occupies 83–300 (IPIIGSDEVG…THKAQALLTK (218 aa)). A divalent metal cation contacts are provided by Asp-89, Glu-90, and Asp-194.

Belongs to the RNase HII family. RnhC subfamily. The cofactor is Mn(2+). Requires Mg(2+) as cofactor.

It localises to the cytoplasm. The enzyme catalyses Endonucleolytic cleavage to 5'-phosphomonoester.. Its function is as follows. Endonuclease that specifically degrades the RNA of RNA-DNA hybrids. The sequence is that of Ribonuclease HIII from Streptococcus pyogenes serotype M49 (strain NZ131).